The sequence spans 511 residues: Glucans biosynthesis protein G (511 aa).

The first 22 residues, 1–22 (MMKMRWLSAAVMLTLYTSSSWA), serve as a signal peptide directing secretion.

The protein belongs to the OpgD/OpgG family.

The protein resides in the periplasm. The protein operates within glycan metabolism; osmoregulated periplasmic glucan (OPG) biosynthesis. In terms of biological role, involved in the biosynthesis of osmoregulated periplasmic glucans (OPGs). This Shigella flexneri protein is Glucans biosynthesis protein G (mdoG).